Reading from the N-terminus, the 1507-residue chain is Paired amphipathic helix protein sin-3 (1507 aa).

5 disordered regions span residues 1–26 (MYNP…TNNA), 228–286 (PLAL…PPRV), 397–450 (ELGS…MMEE), 543–569 (VDDV…DSSK), and 1349–1434 (IPRE…MDHL). Positions 16 to 26 (DQSQQQPTNNA) are enriched in polar residues. The span at 270–279 (RQNRPGRRKK) shows a compositional bias: basic residues. Residues 282-352 (GPPRVDEALA…LGFNTFLPTG (71 aa)) form the PAH domain. Positions 427–438 (DGIDDEDDEESG) are enriched in acidic residues. 2 stretches are compositionally biased toward basic and acidic residues: residues 439–450 (IEDKNNEEMMEE) and 555–568 (EIKK…KDSS). Composition is skewed to acidic residues over residues 1354–1365 (KDDDDDDDEEGN), 1373–1382 (NVKDEDDGGD), and 1389–1421 (PDDD…DEPE).

As to quaternary structure, component of the SIN3S complex, which contains at least sin-3, hda-1, athp-1 and mrg-1. Interacts with ztf-11; the interaction is weak. Interacts with cfp-1. Expressed in all ray structural cells including ray 6, 7, 8 and 9 of the male tail. Also expressed in the inner labial neurons, socket cells, the cephalic neurons in the head and the ventral nerve cord.

It localises to the nucleus. In terms of biological role, probable transcriptional repressor required for the deposition of dimethylated 'Lys-9' of histone H3 (H3K9me2) on asynapsed chromosome pairs (both autosomes and sex chromosomes) during meiosis, but this does not seem to solely affect the transcriptional status. Plays a role in ray fusion and patterning in the male tail, and this may be through activity of the histone deacetylase complex (HDAC). The sequence is that of Paired amphipathic helix protein sin-3 from Caenorhabditis elegans.